The sequence spans 502 residues: MVNIRPDEISSIIRQQIDKYDQGVQVANVGTVLQIGDGIARVYGLDQVMAGELLEFEDETIGIALNLESDNVGVVLMGEGRAILEGSSVKATGKIAQVPVGDGYLGRVVNSLGAPIDGKGDISSSDTRLIESAAPGIISRKSVCEPIQTGITAIDSMIPIGRGQRELIIGDRQTGKTSVAIDTIINQKTEDVVCVYVAIGQKAASVASIVTQLEEKGALDYTVIVAANADEPATLQYIAPYTGAAIAEYFMYKGKATLIIYDDLSKQASAYRQMSLLLRRPPGREAFPGDVFYLHSRLLERAAKLSDALGGGSMTALPIIETQAGDVSAYIPTNVISITDGQIFLSGDLFNAGIRPAINVGISVSRVGSAAQIKAMKQVAGKLKLELAQFAELEAFSQFASDLDQATRNQLARGQRLREILKQPASSPISVEEQVAIIYTGINGFLDEVPVNKVKEFVSQLRTNLKNSKPKFAESIRETKALGSDAEELLKSAIADVKQSMG.

Residue 170–177 (GDRQTGKT) participates in ATP binding.

It belongs to the ATPase alpha/beta chains family. As to quaternary structure, F-type ATPases have 2 components, CF(1) - the catalytic core - and CF(0) - the membrane proton channel. CF(1) has five subunits: alpha(3), beta(3), gamma(1), delta(1), epsilon(1). CF(0) has four main subunits: a, b, b' and c.

The protein resides in the plastid. It localises to the chloroplast thylakoid membrane. It carries out the reaction ATP + H2O + 4 H(+)(in) = ADP + phosphate + 5 H(+)(out). Functionally, produces ATP from ADP in the presence of a proton gradient across the membrane. The alpha chain is a regulatory subunit. The polypeptide is ATP synthase subunit alpha, chloroplastic (Rhodomonas salina (Cryptomonas salina)).